Here is a 157-residue protein sequence, read N- to C-terminus: Ribosomal RNA large subunit methyltransferase H (157 aa).

S-adenosyl-L-methionine is bound by residues Leu73, Gly105, and 124–129 (LSRMTF).

It belongs to the RNA methyltransferase RlmH family. Homodimer.

Its subcellular location is the cytoplasm. It catalyses the reaction pseudouridine(1915) in 23S rRNA + S-adenosyl-L-methionine = N(3)-methylpseudouridine(1915) in 23S rRNA + S-adenosyl-L-homocysteine + H(+). Its function is as follows. Specifically methylates the pseudouridine at position 1915 (m3Psi1915) in 23S rRNA. This Porphyromonas gingivalis (strain ATCC 33277 / DSM 20709 / CIP 103683 / JCM 12257 / NCTC 11834 / 2561) protein is Ribosomal RNA large subunit methyltransferase H.